The following is a 226-amino-acid chain: Ribosomal RNA large subunit methyltransferase E (226 aa).

Glycine 82, tryptophan 84, aspartate 100, aspartate 116, and aspartate 140 together coordinate S-adenosyl-L-methionine. The active-site Proton acceptor is the lysine 180.

Belongs to the class I-like SAM-binding methyltransferase superfamily. RNA methyltransferase RlmE family.

The protein localises to the cytoplasm. The enzyme catalyses uridine(2552) in 23S rRNA + S-adenosyl-L-methionine = 2'-O-methyluridine(2552) in 23S rRNA + S-adenosyl-L-homocysteine + H(+). In terms of biological role, specifically methylates the uridine in position 2552 of 23S rRNA at the 2'-O position of the ribose in the fully assembled 50S ribosomal subunit. The sequence is that of Ribosomal RNA large subunit methyltransferase E from Caulobacter sp. (strain K31).